The following is an 834-amino-acid chain: Protein translocase subunit SecA (834 aa).

Residues Gln-85, 103-107 (GEGKT), and Asp-491 contribute to the ATP site. Residues 790 to 809 (RETSTNINDGEGGSHEPIKR) form a disordered region. Zn(2+)-binding residues include Cys-820, Cys-822, Cys-831, and Cys-832.

This sequence belongs to the SecA family. In terms of assembly, monomer and homodimer. Part of the essential Sec protein translocation apparatus which comprises SecA, SecYEG and auxiliary proteins SecDF. Other proteins may also be involved. The cofactor is Zn(2+).

Its subcellular location is the cell membrane. It is found in the cytoplasm. The catalysed reaction is ATP + H2O + cellular proteinSide 1 = ADP + phosphate + cellular proteinSide 2.. Functionally, part of the Sec protein translocase complex. Interacts with the SecYEG preprotein conducting channel. Has a central role in coupling the hydrolysis of ATP to the transfer of proteins into and across the cell membrane, serving as an ATP-driven molecular motor driving the stepwise translocation of polypeptide chains across the membrane. In Clostridium novyi (strain NT), this protein is Protein translocase subunit SecA.